We begin with the raw amino-acid sequence, 194 residues long: uncharacterized protein (194 aa).

Disordered stretches follow at residues 1 to 72 (MAAK…PAAE) and 113 to 194 (VLIP…SLAV). Basic and acidic residues predominate over residues 26 to 39 (AEGRSSEGRKERTA). A compositionally biased stretch (polar residues) spans 146–171 (GSSSTSRNQVASLAYRTQNTAASQPR).

This is an uncharacterized protein from Homo sapiens (Human).